A 568-amino-acid chain; its full sequence is Proline--tRNA ligase (568 aa).

This sequence belongs to the class-II aminoacyl-tRNA synthetase family. ProS type 1 subfamily. Homodimer.

Its subcellular location is the cytoplasm. It catalyses the reaction tRNA(Pro) + L-proline + ATP = L-prolyl-tRNA(Pro) + AMP + diphosphate. Catalyzes the attachment of proline to tRNA(Pro) in a two-step reaction: proline is first activated by ATP to form Pro-AMP and then transferred to the acceptor end of tRNA(Pro). As ProRS can inadvertently accommodate and process non-cognate amino acids such as alanine and cysteine, to avoid such errors it has two additional distinct editing activities against alanine. One activity is designated as 'pretransfer' editing and involves the tRNA(Pro)-independent hydrolysis of activated Ala-AMP. The other activity is designated 'posttransfer' editing and involves deacylation of mischarged Ala-tRNA(Pro). The misacylated Cys-tRNA(Pro) is not edited by ProRS. The chain is Proline--tRNA ligase from Campylobacter jejuni subsp. jejuni serotype O:6 (strain 81116 / NCTC 11828).